The chain runs to 506 residues: ATP synthase subunit alpha, chloroplastic (506 aa).

Residue 170–177 participates in ATP binding; that stretch reads GDRQTGKT.

The protein belongs to the ATPase alpha/beta chains family. As to quaternary structure, F-type ATPases have 2 components, CF(1) - the catalytic core - and CF(0) - the membrane proton channel. CF(1) has five subunits: alpha(3), beta(3), gamma(1), delta(1), epsilon(1). CF(0) has four main subunits: a, b, b' and c.

It is found in the plastid. It localises to the chloroplast thylakoid membrane. The catalysed reaction is ATP + H2O + 4 H(+)(in) = ADP + phosphate + 5 H(+)(out). In terms of biological role, produces ATP from ADP in the presence of a proton gradient across the membrane. The alpha chain is a regulatory subunit. This Chlorokybus atmophyticus (Soil alga) protein is ATP synthase subunit alpha, chloroplastic.